Here is a 730-residue protein sequence, read N- to C-terminus: MTTAVTQAIIDGFFDASNGDPFATLGMHETEQGIEIRTLLPDANRMVVIERESGKEITELDCVDERGFFVGVIPNCRQFFAYQLQVFWGNEAQIIEDPYRFHPMIDDLEQWLLSEGSMLRPYEVLGAHFMECDGVSGVNFRLWAPNARRVSIVGDFNYWDGRRHPMRFHSKSGVWELFLPKASLGQLYKFELIDCHGNLRLKADPFAFSSQLRPDTASQVSALPNVVEMTEARKKANQGNQPISIYEVHLGSWRRNLENNFWLDYDQIADELIPYVKEMGFTHIEFLPLSEFPFDGSWGYQPLGLYSPTSRFGSPEAFSRLVKRAHEAGINVILDWVPGHFPSDTHGLVAFDGTALYEHEDPREGYHQDWNTLIYNYGRNEVKNFLSSNALYWLERFGVDGIRVDAVASMIYRDYSRVEGEWIPNQYGGRENLEAIEFLKHTNWKIHSEMAGAISIAEESTSFAGVTHPSENGGLGFNFKWNMGWMNDTLAYMKLDPIYRQYHHNKMTFGMVYQYSENFVLPLSHDEVVHGKYSLLGKMPGDTWQKFANLRAYYGYMWGYPGKKLLFMGNEFAQGREWNHEESLDWFLLDENIDGGWHKGVLKLVKDLNQIYQKNRPLFELDNSPEGFDWLVVDDAANSVFAFERRSSNGERIIVVSNFTPVPRHDYRIGVNIVGEYEEILNTDSMYYQGSNVGNFGCVASENIESHGRENSISVSIPPLATVYLRLKAK.

D405 serves as the catalytic Nucleophile. Catalysis depends on E458, which acts as the Proton donor.

Belongs to the glycosyl hydrolase 13 family. GlgB subfamily. In terms of assembly, monomer.

It carries out the reaction Transfers a segment of a (1-&gt;4)-alpha-D-glucan chain to a primary hydroxy group in a similar glucan chain.. It participates in glycan biosynthesis; glycogen biosynthesis. Functionally, catalyzes the formation of the alpha-1,6-glucosidic linkages in glycogen by scission of a 1,4-alpha-linked oligosaccharide from growing alpha-1,4-glucan chains and the subsequent attachment of the oligosaccharide to the alpha-1,6 position. The protein is 1,4-alpha-glucan branching enzyme GlgB of Haemophilus influenzae (strain PittGG).